Reading from the N-terminus, the 274-residue chain is Orotidine 5'-phosphate decarboxylase (274 aa).

Lys-95 (proton donor) is an active-site residue.

The protein belongs to the OMP decarboxylase family. Type 2 subfamily.

The enzyme catalyses orotidine 5'-phosphate + H(+) = UMP + CO2. It functions in the pathway pyrimidine metabolism; UMP biosynthesis via de novo pathway; UMP from orotate: step 2/2. The protein is Orotidine 5'-phosphate decarboxylase of Mycolicibacterium paratuberculosis (strain ATCC BAA-968 / K-10) (Mycobacterium paratuberculosis).